Here is a 335-residue protein sequence, read N- to C-terminus: MDERIISSETVDAEEVSFETSLRPQTLSQYIGQDKVKNNLTVFIEAATLRNEALDHVLLYGPPGLGKTTLAMVIASEMGSQIKTTSGPAIERPGDLATILTSLEPGDVLFIDEIHRLSRAIEEILYPAMEDYCLDIVIGTGPTARSVRLDLPPFTLIGATTRAGLLSAPLRDRFGVIDHLEFYTEEQLTEIVLRTAGILDTKIDDLGAREIARRSRGTPRIANRLLKRVRDFAQVRGNGTVTEKLAKEALTLLQVDPRGLDTIDQKLLHTIIQSFRGGPVGLDTIAASIGEERETIEDMQEPYLLQIGFLQRTPRGRIATETAYNHLGISYEKEV.

The large ATPase domain (RuvB-L) stretch occupies residues 1-183 (MDERIISSET…FGVIDHLEFY (183 aa)). ATP contacts are provided by residues L22, R23, G64, K67, T68, T69, 130 to 132 (EDY), R173, Y183, and R220. Residue T68 coordinates Mg(2+). The small ATPAse domain (RuvB-S) stretch occupies residues 184–254 (TEEQLTEIVL…LAKEALTLLQ (71 aa)). The tract at residues 257–335 (PRGLDTIDQK…HLGISYEKEV (79 aa)) is head domain (RuvB-H). 3 residues coordinate DNA: R293, R312, and R317.

It belongs to the RuvB family. In terms of assembly, homohexamer. Forms an RuvA(8)-RuvB(12)-Holliday junction (HJ) complex. HJ DNA is sandwiched between 2 RuvA tetramers; dsDNA enters through RuvA and exits via RuvB. An RuvB hexamer assembles on each DNA strand where it exits the tetramer. Each RuvB hexamer is contacted by two RuvA subunits (via domain III) on 2 adjacent RuvB subunits; this complex drives branch migration. In the full resolvosome a probable DNA-RuvA(4)-RuvB(12)-RuvC(2) complex forms which resolves the HJ.

It localises to the cytoplasm. It carries out the reaction ATP + H2O = ADP + phosphate + H(+). The RuvA-RuvB-RuvC complex processes Holliday junction (HJ) DNA during genetic recombination and DNA repair, while the RuvA-RuvB complex plays an important role in the rescue of blocked DNA replication forks via replication fork reversal (RFR). RuvA specifically binds to HJ cruciform DNA, conferring on it an open structure. The RuvB hexamer acts as an ATP-dependent pump, pulling dsDNA into and through the RuvAB complex. RuvB forms 2 homohexamers on either side of HJ DNA bound by 1 or 2 RuvA tetramers; 4 subunits per hexamer contact DNA at a time. Coordinated motions by a converter formed by DNA-disengaged RuvB subunits stimulates ATP hydrolysis and nucleotide exchange. Immobilization of the converter enables RuvB to convert the ATP-contained energy into a lever motion, pulling 2 nucleotides of DNA out of the RuvA tetramer per ATP hydrolyzed, thus driving DNA branch migration. The RuvB motors rotate together with the DNA substrate, which together with the progressing nucleotide cycle form the mechanistic basis for DNA recombination by continuous HJ branch migration. Branch migration allows RuvC to scan DNA until it finds its consensus sequence, where it cleaves and resolves cruciform DNA. This chain is Holliday junction branch migration complex subunit RuvB, found in Listeria welshimeri serovar 6b (strain ATCC 35897 / DSM 20650 / CCUG 15529 / CIP 8149 / NCTC 11857 / SLCC 5334 / V8).